Consider the following 194-residue polypeptide: Phosphoheptose isomerase (194 aa).

Residues 37–194 enclose the SIS domain; that stretch reads IADTFKAGGK…LIEKEMVAQG (158 aa). 52–54 contacts substrate; the sequence is NGG. Zn(2+) contacts are provided by His-61 and Glu-65. Substrate is bound by residues Glu-65, 93 to 94, 119 to 121, Ser-124, and Gln-172; these read ND and STS. Residues Gln-172 and His-180 each contribute to the Zn(2+) site.

It belongs to the SIS family. GmhA subfamily. As to quaternary structure, homotetramer. It depends on Zn(2+) as a cofactor.

The protein resides in the cytoplasm. The enzyme catalyses 2 D-sedoheptulose 7-phosphate = D-glycero-alpha-D-manno-heptose 7-phosphate + D-glycero-beta-D-manno-heptose 7-phosphate. Its pathway is carbohydrate biosynthesis; D-glycero-D-manno-heptose 7-phosphate biosynthesis; D-glycero-alpha-D-manno-heptose 7-phosphate and D-glycero-beta-D-manno-heptose 7-phosphate from sedoheptulose 7-phosphate: step 1/1. Its function is as follows. Catalyzes the isomerization of sedoheptulose 7-phosphate in D-glycero-D-manno-heptose 7-phosphate. The polypeptide is Phosphoheptose isomerase (Sodalis glossinidius (strain morsitans)).